Consider the following 128-residue polypeptide: Azurin (128 aa).

The Plastocyanin-like domain maps to 1–128; the sequence is AECSVDIQGN…ALMKGTLTLK (128 aa). An intrachain disulfide couples cysteine 3 to cysteine 26. Positions 46, 112, 117, and 121 each coordinate Cu cation.

The protein localises to the periplasm. Functionally, transfers electrons from cytochrome c551 to cytochrome oxidase. This is Azurin from Pseudomonas aeruginosa.